Here is a 456-residue protein sequence, read N- to C-terminus: Adenylosuccinate synthetase isozyme 2 (456 aa).

Residues 1–14 (MSISESSPAATSLP) are compositionally biased toward polar residues. Residues 1 to 24 (MSISESSPAATSLPNGDCGRPRAR) form a disordered region. Residues 39–45 (GDEGKGK) and 67–69 (GHT) each bind GTP. The active-site Proton acceptor is D40. 2 residues coordinate Mg(2+): D40 and G67. Residue D40 participates in substrate binding. IMP-binding positions include 40 to 43 (DEGK), 65 to 68 (NAGH), T162, R176, N255, T270, and R334. H68 functions as the Proton donor in the catalytic mechanism. Residue 330 to 336 (VTTGRKR) coordinates substrate. Residues R336, 362–364 (KLD), and 444–447 (GVGK) each bind GTP.

This sequence belongs to the adenylosuccinate synthetase family. As to quaternary structure, homodimer. Mg(2+) is required as a cofactor.

The protein resides in the cytoplasm. Its subcellular location is the mitochondrion. It catalyses the reaction IMP + L-aspartate + GTP = N(6)-(1,2-dicarboxyethyl)-AMP + GDP + phosphate + 2 H(+). It functions in the pathway purine metabolism; AMP biosynthesis via de novo pathway; AMP from IMP: step 1/2. Inhibited competitively by AMP and IMP and non-competitively by fructose 1,6-bisphosphate. Plays an important role in the de novo pathway and in the salvage pathway of purine nucleotide biosynthesis. Catalyzes the first committed step in the biosynthesis of AMP from IMP. The protein is Adenylosuccinate synthetase isozyme 2 (Adss2) of Mus musculus (Mouse).